A 1079-amino-acid chain; its full sequence is BRD4-interacting chromatin-remodeling complex-associated protein-like (1079 aa).

Disordered regions lie at residues 51-79 and 509-604; these read NSSNADPKSSLKGVSNQLGEGPSDGLPLS and LHLS…TPGT. The segment covering 68–79 has biased composition (low complexity); that stretch reads LGEGPSDGLPLS. The segment covering 544–576 has biased composition (polar residues); that stretch reads SSASTAHPSLGSAVQSGSSGSNFTGDQLTQPNR. Residues 590-604 show a composition bias toward low complexity; that stretch reads SSSKSTSTFSNTPGT. Ser623 carries the post-translational modification Phosphoserine. Disordered stretches follow at residues 669–691, 837–877, and 917–954; these read EKVVGSSPGHPAVQVESHSGGQK, TQFG…NHDQ, and TSEEKASRREPLKASQCSPGPEGHRKTSSRSDHGTESK. Composition is skewed to basic and acidic residues over residues 918-928 and 938-952; these read SEEKASRREPL and EGHRKTSSRSDHGTE. Ser980 is subject to Phosphoserine.

As to quaternary structure, component of the multiprotein chromatin-remodeling complexes SWI/SNF: SWI/SNF-A (BAF), SWI/SNF-B (PBAF) and related complexes. The canonical complex contains a catalytic subunit (either SMARCA4/BRG1/BAF190A or SMARCA2/BRM/BAF190B) and at least SMARCE1, ACTL6A/BAF53, SMARCC1/BAF155, SMARCC2/BAF170, and SMARCB1/SNF5/BAF47. Other subunits specific to each of the complexes may also be present permitting several possible combinations developmentally and tissue specific. Component of the SWI/SNF (GBAF) subcomplex, which includes at least BICRA or BICRAL (mutually exclusive), BRD9, SS18, the core BAF subunits, SMARCA2/BRM, SMARCA4/BRG1/BAF190A, ACTL6A/BAF53, SMARCC1/BAF155, and SMARCD1/BAF60A.

Its function is as follows. Component of SWI/SNF chromatin remodeling subcomplex GBAF that carries out key enzymatic activities, changing chromatin structure by altering DNA-histone contacts within a nucleosome in an ATP-dependent manner. In Homo sapiens (Human), this protein is BRD4-interacting chromatin-remodeling complex-associated protein-like.